We begin with the raw amino-acid sequence, 2051 residues long: Fatty acid synthase subunit beta (2051 aa).

N-acetylmethionine is present on Met1. An acetyltransferase region spans residues 1–468; that stretch reads MDAYSTRPLT…VYDTFDGSDL (468 aa). The active-site For acetyltransferase activity is the Ser274. Residues 480-868 form an enoyl reductase region; that stretch reads VDCIIRLPVK…TRGVMLWKEF (389 aa). Thr733 is subject to Phosphothreonine. Ser1121 carries the phosphoserine modification. The dehydratase stretch occupies residues 1144-1626; that stretch reads GSEINWRHAS…LPNTALKTSI (483 aa). Lys1364 is covalently cross-linked (Glycyl lysine isopeptide (Lys-Gly) (interchain with G-Cter in ubiquitin)). The MaoC-like domain maps to 1523 to 1648; the sequence is NGSTLEQKVN…KFETRNEDDV (126 aa). The tract at residues 1627 to 1845 is malonyl/palmitoyl transferase; the sequence is QHVGMINGRK…MTMQVAVPRD (219 aa). The active-site For malonyltransferase activity is the Ser1808.

This sequence belongs to the fungal fatty acid synthetase subunit beta family. In terms of assembly, [Alpha(6)beta(6)] hexamers of two multifunctional subunits (alpha and beta).

It catalyses the reaction acetyl-CoA + n malonyl-CoA + 2n NADPH + 4n H(+) = a long-chain-acyl-CoA + n CoA + n CO2 + 2n NADP(+).. The enzyme catalyses holo-[ACP] + acetyl-CoA = acetyl-[ACP] + CoA. The catalysed reaction is holo-[ACP] + malonyl-CoA = malonyl-[ACP] + CoA. It carries out the reaction a (3R)-hydroxyacyl-[ACP] = a (2E)-enoyl-[ACP] + H2O. It catalyses the reaction a 2,3-saturated acyl-[ACP] + NAD(+) = a (2E)-enoyl-[ACP] + NADH + H(+). The enzyme catalyses (9Z)-octadecenoyl-[ACP] + H2O = (9Z)-octadecenoate + holo-[ACP] + H(+). Functionally, fatty acid synthetase catalyzes the formation of long-chain fatty acids from acetyl-CoA, malonyl-CoA and NADPH. The beta subunit contains domains for: [acyl-carrier-protein] acetyltransferase and malonyltransferase, S-acyl fatty acid synthase thioesterase, enoyl-[acyl-carrier-protein] reductase, and 3-hydroxypalmitoyl-[acyl-carrier-protein] dehydratase. This chain is Fatty acid synthase subunit beta (FAS1), found in Saccharomyces cerevisiae (strain ATCC 204508 / S288c) (Baker's yeast).